The primary structure comprises 528 residues: Abrin-a (528 aa).

Q1 bears the Pyrrolidone carboxylic acid mark. E164 is an active-site residue. Disulfide bonds link C247–C269, C286–C305, and C329–C346. Residues 273–400 (YEPTVRIGGR…YLMRQGWRTG (128 aa)) enclose the Ricin B-type lectin 1 domain. A 1-alpha repeat occupies 283–325 (DGMCVDVYDNGYHNGNRIIMWKCKDRLEENQLWTLKSDKTIRS). The 1-beta repeat unit spans residues 326-366 (NGKCLTTYGYAPGSYVMIYDCTSAVAEATYWEIWDNGTIIN). Residues N361 and N401 are each glycosylated (N-linked (GlcNAc...) asparagine). A 1-gamma repeat occupies 369-401 (SALVLSAESSSMGGTLTVQTNEYLMRQGWRTGN). Residues 403 to 527 (TSPFVTSISG…GKPNQIWLTL (125 aa)) enclose the Ricin B-type lectin 2 domain. The 2-alpha repeat unit spans residues 414–449 (SDLCMQAQGSNVWMADCDSNKKEQQWALYTDGSIRS). Disulfide bonds link C417-C430 and C456-C473. The stretch at 453–492 (TNNCLTSKDHKQGSTILLMGCSNGWASQRWVFKNDGSIYS) is one 2-beta repeat. The 2-gamma repeat unit spans residues 495 to 528 (DDMVMDVKGSDPSLKQIILWPYTGKPNQIWLTLF).

The protein in the N-terminal section; belongs to the ribosome-inactivating protein family. Type 2 RIP subfamily. Disulfide-linked dimer of A and B chains.

The catalysed reaction is Endohydrolysis of the N-glycosidic bond at one specific adenosine on the 28S rRNA.. The A chain is responsible for inhibiting protein synthesis through the catalytic inactivation of 60S ribosomal subunits by removing adenine from position 4,324 of 28S rRNA. Abrin-a is more toxic than ricin. In terms of biological role, the B chain is a galactose-specific lectin that facilitates the binding of abrin to the cell membrane that precedes endocytosis. This is Abrin-a from Abrus precatorius (Indian licorice).